A 209-amino-acid chain; its full sequence is Outer-membrane lipoprotein carrier protein (209 aa).

The signal sequence occupies residues 1–21; that stretch reads MKLLKLLSVAALSAASMMANA.

It belongs to the LolA family. In terms of assembly, monomer.

Its subcellular location is the periplasm. In terms of biological role, participates in the translocation of lipoproteins from the inner membrane to the outer membrane. Only forms a complex with a lipoprotein if the residue after the N-terminal Cys is not an aspartate (The Asp acts as a targeting signal to indicate that the lipoprotein should stay in the inner membrane). The protein is Outer-membrane lipoprotein carrier protein of Hahella chejuensis (strain KCTC 2396).